The primary structure comprises 243 residues: Adenylate dimethylallyltransferase (243 aa).

It catalyses the reaction dimethylallyl diphosphate + AMP = N(6)-(dimethylallyl)adenosine 5'-phosphate + diphosphate. Its function is as follows. Transfers dimethylallyl groups to AMP as part of the biosynthesis of cytokinin phytohormones. This is Adenylate dimethylallyltransferase (tzs) from Agrobacterium fabrum (strain C58 / ATCC 33970) (Agrobacterium tumefaciens (strain C58)).